The following is a 356-amino-acid chain: S-adenosylmethionine:tRNA ribosyltransferase-isomerase (356 aa).

This sequence belongs to the QueA family. As to quaternary structure, monomer.

The protein resides in the cytoplasm. The catalysed reaction is 7-aminomethyl-7-carbaguanosine(34) in tRNA + S-adenosyl-L-methionine = epoxyqueuosine(34) in tRNA + adenine + L-methionine + 2 H(+). Its pathway is tRNA modification; tRNA-queuosine biosynthesis. Transfers and isomerizes the ribose moiety from AdoMet to the 7-aminomethyl group of 7-deazaguanine (preQ1-tRNA) to give epoxyqueuosine (oQ-tRNA). The protein is S-adenosylmethionine:tRNA ribosyltransferase-isomerase of Histophilus somni (strain 2336) (Haemophilus somnus).